Here is a 39-residue protein sequence, read N- to C-terminus: Larval cuticle protein SC6 (39 aa).

One can recognise a Chitin-binding type R&amp;R domain in the interval 15–39 (VDQFKYGLELDNSIKADQEGHLEGD).

Its function is as follows. Component of the cuticle of the larva of flesh fly. The sequence is that of Larval cuticle protein SC6 from Sarcophaga bullata (Grey flesh fly).